The following is a 71-amino-acid chain: Ceratotoxin-A (71 aa).

A signal peptide spans 1-23 (MANLKAVFLICIVAFIAFQCVVA). 2 consecutive propeptides follow at residues 24–35 (EPAAEDSIVVKR) and 65–71 (VAAGLVG).

As to quaternary structure, homomer of four to six subunits.

The protein localises to the secreted. Its function is as follows. Female-specific peptides with potent activity against Gram-positive and Gram-negative bacteria. They have as well hemolytic activity. This Ceratitis capitata (Mediterranean fruit fly) protein is Ceratotoxin-A (CTXA2).